Consider the following 121-residue polypeptide: Large ribosomal subunit protein uL14c (121 aa).

The protein belongs to the universal ribosomal protein uL14 family. As to quaternary structure, part of the 50S ribosomal subunit.

It localises to the plastid. The protein localises to the chloroplast. Its function is as follows. Binds to 23S rRNA. This is Large ribosomal subunit protein uL14c from Euglena gracilis.